A 204-amino-acid polypeptide reads, in one-letter code: tRNA (pseudouridine(54)-N(1))-methyltransferase (204 aa).

Residues Leu-130, Gly-157, 180–185 (LSPLEL), and Cys-190 contribute to the S-adenosyl-L-methionine site.

This sequence belongs to the methyltransferase superfamily. TrmY family. Homodimer.

Its subcellular location is the cytoplasm. The catalysed reaction is pseudouridine(54) in tRNA + S-adenosyl-L-methionine = N(1)-methylpseudouridine(54) in tRNA + S-adenosyl-L-homocysteine + H(+). Its function is as follows. Specifically catalyzes the N1-methylation of pseudouridine at position 54 (Psi54) in tRNAs. The protein is tRNA (pseudouridine(54)-N(1))-methyltransferase of Methanococcus aeolicus (strain ATCC BAA-1280 / DSM 17508 / OCM 812 / Nankai-3).